A 533-amino-acid polypeptide reads, in one-letter code: AAA-ATPase At5g17740 (533 aa).

Residues 11–27 traverse the membrane as a helical segment; that stretch reads ASMFSTYASMMGYVMII. Residue 252 to 259 participates in ATP binding; that stretch reads GPPGTGKS.

Belongs to the AAA ATPase family. BCS1 subfamily. Requires Mg(2+) as cofactor.

Its subcellular location is the membrane. The catalysed reaction is ATP + H2O = ADP + phosphate + H(+). In Arabidopsis thaliana (Mouse-ear cress), this protein is AAA-ATPase At5g17740.